The sequence spans 202 residues: Glycerol-3-phosphate acyltransferase (202 aa).

The next 4 helical transmembrane spans lie at 2–22, 80–100, 119–139, and 158–178; these read ANLLFALAAYLIGSVSFAVVV, LNETGLAMVALAVFLGHLFPV, AIDPILGLGTLATWLIIAFFF, and VLMNGVDVMTGAIFVISVLLI.

This sequence belongs to the PlsY family. As to quaternary structure, probably interacts with PlsX.

It localises to the cell inner membrane. It catalyses the reaction an acyl phosphate + sn-glycerol 3-phosphate = a 1-acyl-sn-glycero-3-phosphate + phosphate. It participates in lipid metabolism; phospholipid metabolism. Catalyzes the transfer of an acyl group from acyl-phosphate (acyl-PO(4)) to glycerol-3-phosphate (G3P) to form lysophosphatidic acid (LPA). This enzyme utilizes acyl-phosphate as fatty acyl donor, but not acyl-CoA or acyl-ACP. This Cupriavidus necator (strain ATCC 17699 / DSM 428 / KCTC 22496 / NCIMB 10442 / H16 / Stanier 337) (Ralstonia eutropha) protein is Glycerol-3-phosphate acyltransferase.